The following is a 277-amino-acid chain: Carbonyl reductase [NADPH] 3 (277 aa).

An N-acetylserine modification is found at S2. Residues V10–V34, R38–R42, D63–I64, and N90 contribute to the NADP(+) site. Position 30 is a phosphoserine (S30). S140 serves as a coordination point for substrate. Residue Y194 is the Proton acceptor of the active site. NADP(+)-binding positions include Y194–K198 and D239.

It belongs to the short-chain dehydrogenases/reductases (SDR) family. As to expression, detected in ovary, pancreas, intestine, colon, kidney, brain, thymus, lung, heart, liver, spleen, leukocyte, prostate and testis.

It is found in the cytoplasm. It carries out the reaction a secondary alcohol + NADP(+) = a ketone + NADPH + H(+). The enzyme catalyses a quinone + NADPH + H(+) = a quinol + NADP(+). Catalyzes the NADPH-dependent reduction of carbonyl compounds to their corresponding alcohols. Has low NADPH-dependent oxidoreductase activity. Acts on several orthoquinones, acts as well on non-quinone compounds, such as isatin or on the anticancer drug oracin. Best substrates for CBR3 is 1,2- naphthoquinone, hence could play a role in protection against cytotoxicity of exogenous quinones. Exerts activity toward ortho-quinones but not paraquinones. No endogenous substrate for CBR3 except isatin has been identified. The protein is Carbonyl reductase [NADPH] 3 of Homo sapiens (Human).